A 119-amino-acid polypeptide reads, in one-letter code: Ribosome-binding factor A (119 aa).

It belongs to the RbfA family. Monomer. Binds 30S ribosomal subunits, but not 50S ribosomal subunits or 70S ribosomes.

It is found in the cytoplasm. Functionally, one of several proteins that assist in the late maturation steps of the functional core of the 30S ribosomal subunit. Associates with free 30S ribosomal subunits (but not with 30S subunits that are part of 70S ribosomes or polysomes). Required for efficient processing of 16S rRNA. May interact with the 5'-terminal helix region of 16S rRNA. The protein is Ribosome-binding factor A of Ligilactobacillus salivarius (strain UCC118) (Lactobacillus salivarius).